Here is a 56-residue protein sequence, read N- to C-terminus: UPF0291 protein Clos_1191 (56 aa).

The protein belongs to the UPF0291 family.

It localises to the cytoplasm. The chain is UPF0291 protein Clos_1191 from Alkaliphilus oremlandii (strain OhILAs) (Clostridium oremlandii (strain OhILAs)).